We begin with the raw amino-acid sequence, 297 residues long: MNIELRHLRYFVAVAEELHFGRAAARLNISQPPLSQQIQALEQQIGARLLARTNRSVLLTAAGKQFLADSRQILSMVDDAAARAERLHQGEAGELRIGFTSSAPFIRAVSDTLSLFRRDYPDVHLQTREMNTREQIAPLIEGTLDMGLLRNTALPESLEHAVIVHEPLMAMIPHDHPLANNPNVTLAELAKEPFVFFDPHVGTGLYDDILGLMRRYHLTPVITQEVGEAMTIIGLVSAGLGVSILPASFKRVQLNEMRWVPIAEEDAVSEMWLVWPKHHEQSPAARNFRIHLLNALR.

Residues 1-60 enclose the HTH lysR-type domain; that stretch reads MNIELRHLRYFVAVAEELHFGRAAARLNISQPPLSQQIQALEQQIGARLLARTNRSVLLT. The H-T-H motif DNA-binding region spans 20–40; that stretch reads FGRAAARLNISQPPLSQQIQA.

This sequence belongs to the LysR transcriptional regulatory family.

This is an uncharacterized protein from Escherichia coli (strain K12).